Consider the following 430-residue polypeptide: Anaerobic glycerol-3-phosphate dehydrogenase subunit B (430 aa).

It belongs to the anaerobic G-3-P dehydrogenase subunit B family. Composed of a catalytic GlpA/B dimer and of membrane bound GlpC. FMN serves as cofactor.

The enzyme catalyses a quinone + sn-glycerol 3-phosphate = dihydroxyacetone phosphate + a quinol. It functions in the pathway polyol metabolism; glycerol degradation via glycerol kinase pathway; glycerone phosphate from sn-glycerol 3-phosphate (anaerobic route): step 1/1. Conversion of glycerol 3-phosphate to dihydroxyacetone. Uses fumarate or nitrate as electron acceptor. The chain is Anaerobic glycerol-3-phosphate dehydrogenase subunit B from Actinobacillus succinogenes (strain ATCC 55618 / DSM 22257 / CCUG 43843 / 130Z).